Consider the following 675-residue polypeptide: Transmembrane protein 232 (675 aa).

A helical membrane pass occupies residues 163 to 183 (LVKIGYLIFLRLFVFFLHGHL). Residues 598–634 (WQKDMEARKREEEAYKAQNQKDKEEKEKIHFQEIMKQ) are a coiled coil. Residues 605-624 (RKREEEAYKAQNQKDKEEKE) are disordered.

As to expression, high expression in the testis and weak expression levels in the spleen, liver, brain, uterus, lung, epididymis and kidney. Not detected in the heart or ovary.

It localises to the membrane. Plays a critical role for male fertility and sperm motility by regulating sperm cytoplasm removal and maintaining axoneme integrity. The polypeptide is Transmembrane protein 232 (Tmem232) (Mus musculus (Mouse)).